Here is a 284-residue protein sequence, read N- to C-terminus: WUSCHEL-related homeobox 10 (284 aa).

Positions 1–43 (MDRTATASWEVMSRRGEQQQQLMMQAPASHNGGSGGGEPARSR) are disordered. A DNA-binding region (homeobox; WUS-type) is located at residues 39–103 (PARSRWAPKP…NRRSRSRRRA (65 aa)).

The protein belongs to the WUS homeobox family.

It is found in the nucleus. Its function is as follows. Transcription factor which may be involved in developmental processes. This is WUSCHEL-related homeobox 10 (WOX10) from Oryza sativa subsp. japonica (Rice).